We begin with the raw amino-acid sequence, 389 residues long: (S)-8-oxocitronellyl enol synthase CYC1 (389 aa).

NADP(+) contacts are provided by residues 34 to 36 (TGI), 62 to 63 (RR), 80 to 81 (DV), 104 to 105 (AW), and Gln-138. Catalysis depends on residues Lys-142 and Tyr-174. Residues Lys-142 and Tyr-174 each contribute to the substrate site. Residues Tyr-174, Val-201, and 208–210 (SMM) contribute to the NADP(+) site. Ser-350 serves as a coordination point for substrate.

Belongs to the short-chain dehydrogenases/reductases (SDR) family. Highly divergent.

The enzyme catalyses (S)-8-oxocitronellyl enol + NADP(+) = (6E)-8-oxogeranial + NADPH + H(+). The catalysed reaction is (S)-8-oxocitronellyl enol + NAD(+) = (6E)-8-oxogeranial + NADH + H(+). Iridoid synthase that catalyzes the first step in generation of the iridoid ring scaffold using the linear monoterpene (6E)-8-oxogeranial as substrate. Iridoids comprise a large family of distinctive bicyclic monoterpenes that possess a wide range of pharmacological activities, including anticancer, anti-inflammatory, antifungal and antibacterial activities. The sequence is that of (S)-8-oxocitronellyl enol synthase CYC1 from Camptotheca acuminata (Happy tree).